Here is a 673-residue protein sequence, read N- to C-terminus: Sodium/myo-inositol cotransporter 2 (673 aa).

Over 1 to 27 (MESATISPQPPQSDSLEAFPQKSMEPA) the chain is Extracellular. Residues 28 to 48 (DIAVLVLYFLFVLAVGLWSTV) form a helical membrane-spanning segment. Residues 49-65 (RTKRDTVKGYFLAGGDM) are Cytoplasmic-facing. The chain crosses the membrane as a helical span at residues 66–88 (VWWPVGASLFASNVGSGHFIGLA). At 89 to 102 (GSGAAVGISVAAYE) the chain is on the extracellular side. The helical transmembrane segment at 103-123 (LNGLFSVLMLAWVFLPIYIAG) threads the bilayer. Residues 124–148 (QVTTMPEYLRRRFGGNRISITLAVL) lie on the Cytoplasmic side of the membrane. Residues 149-169 (YLFIYIFTKISVDMYAGAIFI) form a helical membrane-spanning segment. Residues 170–180 (QQSLHLDLYLA) are Extracellular-facing. Residues 181-201 (IVGLLAITALYTVAGGLAAVI) traverse the membrane as a helical segment. Over 202–208 (YTDALQT) the chain is Cytoplasmic. A helical transmembrane segment spans residues 209 to 229 (VIMLIGAFILMGYSFAAVGGM). At 230-272 (EGLKDQYFLALASNRSENSSCGLPREDAFHIFRDPLTSDLPWP) the chain is on the extracellular side. The chain crosses the membrane as a helical span at residues 273 to 293 (GILFGMSIPSLWYWCTDQVIV). The Cytoplasmic portion of the chain corresponds to 294-308 (QRSLAAKNLSHAKGG). A helical transmembrane segment spans residues 309–329 (SLMAAYLKVLPLFLMVFPGMV). Topologically, residues 330-375 (SRVLFPDQVACAHPDICQRVCSNPSGCSDIAYPKLVLELLPTGLRG) are extracellular. Residues 376 to 396 (LMMAVMVAALMSSLTSIFNSA) form a helical membrane-spanning segment. Residues 397–418 (STIFTMDLWNHIRPRASERELM) are Cytoplasmic-facing. A helical membrane pass occupies residues 419–439 (IVGRIFVFALVLVSILWIPIV). The Extracellular segment spans residues 440 to 446 (QASQGGQ). A helical transmembrane segment spans residues 447–467 (LFIYIQSISSYLQPPVAMVFI). Topologically, residues 468-479 (MGCFWKRTNEKG) are cytoplasmic. A helical transmembrane segment spans residues 480–500 (AFSGLILGLLLGLVRLILDFV). At 501–521 (YAQPRCDQPDDRPAVVKDVHY) the chain is on the extracellular side. Residues 522 to 542 (LYFSMILSFTTLITVVTVSWF) form a helical membrane-spanning segment. Residues 543–652 (TETPSKEMVS…SLEENPLVKT (110 aa)) are Cytoplasmic-facing. Residues 653–673 (LLDVNCIVCISCAIFLWGYFA) form a helical membrane-spanning segment.

It belongs to the sodium:solute symporter (SSF) (TC 2.A.21) family.

It localises to the membrane. It is found in the apical cell membrane. The enzyme catalyses myo-inositol(out) + 2 Na(+)(out) = myo-inositol(in) + 2 Na(+)(in). The catalysed reaction is 1D-chiro-inositol(out) + 2 Na(+)(out) = 1D-chiro-inositol(in) + 2 Na(+)(in). It carries out the reaction D-glucose(out) + 2 Na(+)(out) = D-glucose(in) + 2 Na(+)(in). It catalyses the reaction D-xylose(out) + 2 Na(+)(out) = D-xylose(in) + 2 Na(+)(in). Its activity is regulated as follows. MI transport activity inhibited by D-chiro-inositol (DCI), phlorizin (Pz) and sodium (Na(+)). Insulin increases D-chiro-inositol uptake. Its function is as follows. Involved in the sodium-dependent cotransport of myo-inositol (MI) with a Na(+):MI stoichiometry of 2:1. Exclusively responsible for apical MI transport and absorption in intestine. Can also transport D-chiro-inositol (DCI) but not L-fucose. Exhibits stereospecific cotransport of both D-glucose and D-xylose. May induce apoptosis through the TNF-alpha, PDCD1 pathway. May play a role in the regulation of MI concentration in serum, involving reabsorption in at least the proximal tubule of the kidney. The protein is Sodium/myo-inositol cotransporter 2 of Mus musculus (Mouse).